The sequence spans 518 residues: 3-phosphoshikimate 1-carboxyvinyltransferase 1, chloroplastic (518 aa).

The N-terminal 74 residues, 1–74 (MAQISSMGQG…RISASVVTAQ (74 aa)), are a transit peptide targeting the chloroplast. K97, S98, and R102 together coordinate 3-phosphoshikimate. K97 serves as a coordination point for phosphoenolpyruvate. Phosphoenolpyruvate-binding residues include G175 and R205. Residues S252, S253, Q254, S280, D405, and K432 each contribute to the 3-phosphoshikimate site. Q254 contributes to the phosphoenolpyruvate binding site. D405 serves as the catalytic Proton acceptor. Phosphoenolpyruvate contacts are provided by R436, R478, and K503.

Belongs to the EPSP synthase family.

The protein resides in the plastid. It localises to the chloroplast. It carries out the reaction 3-phosphoshikimate + phosphoenolpyruvate = 5-O-(1-carboxyvinyl)-3-phosphoshikimate + phosphate. Its pathway is metabolic intermediate biosynthesis; chorismate biosynthesis; chorismate from D-erythrose 4-phosphate and phosphoenolpyruvate: step 6/7. Catalyzes the transfer of the enolpyruvyl moiety of phosphoenolpyruvate (PEP) to the 5-hydroxyl of shikimate-3-phosphate (S3P) to produce enolpyruvyl shikimate-3-phosphate and inorganic phosphate. This Nicotiana tabacum (Common tobacco) protein is 3-phosphoshikimate 1-carboxyvinyltransferase 1, chloroplastic (EPSPS-1).